The chain runs to 394 residues: Elongation factor Tu 2 (394 aa).

The region spanning 10 to 204 (KPHVNVGTIG…YLDTYIPEPE (195 aa)) is the tr-type G domain. The segment at 19 to 26 (GHVDHGKT) is G1. GTP is bound at residue 19-26 (GHVDHGKT). Position 26 (Thr-26) interacts with Mg(2+). Positions 60 to 64 (GITIN) are G2. The segment at 81 to 84 (DCPG) is G3. GTP contacts are provided by residues 81–85 (DCPGH) and 136–139 (NKCD). The segment at 136–139 (NKCD) is G4. A G5 region spans residues 174-176 (SAL).

Belongs to the TRAFAC class translation factor GTPase superfamily. Classic translation factor GTPase family. EF-Tu/EF-1A subfamily. As to quaternary structure, monomer.

The protein localises to the cytoplasm. It carries out the reaction GTP + H2O = GDP + phosphate + H(+). In terms of biological role, GTP hydrolase that promotes the GTP-dependent binding of aminoacyl-tRNA to the A-site of ribosomes during protein biosynthesis. In Yersinia enterocolitica serotype O:8 / biotype 1B (strain NCTC 13174 / 8081), this protein is Elongation factor Tu 2.